A 379-amino-acid polypeptide reads, in one-letter code: 3-dehydroquinate synthase (379 aa).

Residues 67–72, 101–105, 125–126, lysine 138, and lysine 147 contribute to the NAD(+) site; these read SGEKNK, GVVLD, and TT. 3 residues coordinate Zn(2+): glutamate 180, histidine 242, and histidine 258.

The protein belongs to the sugar phosphate cyclases superfamily. Dehydroquinate synthase family. It depends on NAD(+) as a cofactor. Requires Co(2+) as cofactor. Zn(2+) serves as cofactor.

Its subcellular location is the cytoplasm. The catalysed reaction is 7-phospho-2-dehydro-3-deoxy-D-arabino-heptonate = 3-dehydroquinate + phosphate. The protein operates within metabolic intermediate biosynthesis; chorismate biosynthesis; chorismate from D-erythrose 4-phosphate and phosphoenolpyruvate: step 2/7. Functionally, catalyzes the conversion of 3-deoxy-D-arabino-heptulosonate 7-phosphate (DAHP) to dehydroquinate (DHQ). In Chlamydia abortus (strain DSM 27085 / S26/3) (Chlamydophila abortus), this protein is 3-dehydroquinate synthase.